The primary structure comprises 178 residues: Large ribosomal subunit protein uL6 (178 aa).

The protein belongs to the universal ribosomal protein uL6 family. In terms of assembly, part of the 50S ribosomal subunit.

Functionally, this protein binds to the 23S rRNA, and is important in its secondary structure. It is located near the subunit interface in the base of the L7/L12 stalk, and near the tRNA binding site of the peptidyltransferase center. This is Large ribosomal subunit protein uL6 from Streptococcus uberis (strain ATCC BAA-854 / 0140J).